A 247-amino-acid chain; its full sequence is Suppressor of silencing P0 (247 aa).

An F-box-like domain is found at 76 to 95 (LPRHLHYECLEWGLLCGTHP).

This sequence belongs to the polerovirus P0 protein family.

Its function is as follows. Suppressor of RNA-mediated gene silencing, also known as post-transcriptional gene silencing (PTGS), a mechanism of plant viral defense that limits the accumulation of viral RNAs. The P0 protein suppresses local PTGS using its F-box-like domain to mediate destabilization and degradation of the AGO1 protein, although not via an interaction with host SKP1A. Participates, together with the proteins P1 and P7, in the inhibition of the induction of aphid-induced host phytohormones. This could play a role in the attraction to the infected plants by aphids. This is Suppressor of silencing P0 from Potato leafroll virus (strain Potato/Netherlands/Wageningen/1989) (PLrV).